Consider the following 102-residue polypeptide: Co-chaperonin GroES (102 aa).

Belongs to the GroES chaperonin family. In terms of assembly, heptamer of 7 subunits arranged in a ring. Interacts with the chaperonin GroEL.

It localises to the cytoplasm. Functionally, together with the chaperonin GroEL, plays an essential role in assisting protein folding. The GroEL-GroES system forms a nano-cage that allows encapsulation of the non-native substrate proteins and provides a physical environment optimized to promote and accelerate protein folding. GroES binds to the apical surface of the GroEL ring, thereby capping the opening of the GroEL channel. This is Co-chaperonin GroES from Streptomyces griseus subsp. griseus (strain JCM 4626 / CBS 651.72 / NBRC 13350 / KCC S-0626 / ISP 5235).